The sequence spans 802 residues: uncharacterized protein (802 aa).

Residues 6 to 41 (SRSEKVKRIFQQFDGNLDGGLSREEMSALVVAVNPR) enclose the EF-hand 1 domain. 7 TPR repeats span residues 229-262 (FDGHMAIGKVLYEHQLFKEALVSFKRACELQPTD), 264-296 (RPHFKAGNCLYVLGKYKESKDEFLLALEAAESG), 305-338 (PQIYVNLGISLEGEGMVLSACEYYREAAILCPTH), 339-372 (YRALKLLGSALFGVGEYRAAVKALEEAIYLKPDY), 373-406 (ADAHCDLASSLHAMGEDERAIEVFQRAIDLKPGH), 407-440 (VDALYNLGGLYMDLGRFQRASEMYTRVLAVWPNH), and 442-474 (RAQLNKAVSLLGAGETEEAKRALKEALKMTNRV). The EF-hand 2 domain occupies 595 to 630 (AIKAINEKILSVLDDSGSGRVDLGMFYAVIAPLCGG).

This is an uncharacterized protein from Arabidopsis thaliana (Mouse-ear cress).